We begin with the raw amino-acid sequence, 217 residues long: MERHFMDSQIKGVSTGTTILAVTFNGGVIIGSDSRASIGGSYVSSKTINKLIQVHDRIFCCIAGSLADAQAVTKAAKFQISFHSIQMESPPLVKAAASVLKELCYNNKEELQAGFITAGWDRKKGPQVYTVALGGMLLSQPFTIGGSGSTYIYGYADAKYKPDMSKEECLQFATNALALAMGRDNVSGGVAHLVVITEEGVEHVVIPGDKLPKFHDE.

Residues 1 to 16 (MERHFMDSQIKGVSTG) constitute a propeptide, removed in mature form. Catalysis depends on threonine 17, which acts as the Nucleophile.

This sequence belongs to the peptidase T1B family. As to quaternary structure, the 26S proteasome consists of a 20S proteasome core and two 19S regulatory subunits. The 20S proteasome core is composed of 28 subunits that are arranged in four stacked rings, resulting in a barrel-shaped structure. The two end rings are each formed by seven alpha subunits, and the two central rings are each formed by seven beta subunits. The catalytic chamber with the active sites is on the inside of the barrel.

It is found in the cytoplasm. The protein resides in the nucleus. It carries out the reaction Cleavage of peptide bonds with very broad specificity.. The proteasome is a multicatalytic proteinase complex which is characterized by its ability to cleave peptides with Arg, Phe, Tyr, Leu, and Glu adjacent to the leaving group at neutral or slightly basic pH. The proteasome has an ATP-dependent proteolytic activity. This subunit is involved in antigen processing to generate class I binding peptides. This chain is Proteasome subunit beta type-6-B like protein (psmb6l-b), found in Salmo salar (Atlantic salmon).